The primary structure comprises 291 residues: 33 kDa chaperonin (291 aa).

Cystine bridges form between C235/C237 and C268/C271.

This sequence belongs to the HSP33 family. Post-translationally, under oxidizing conditions two disulfide bonds are formed involving the reactive cysteines. Under reducing conditions zinc is bound to the reactive cysteines and the protein is inactive.

The protein resides in the cytoplasm. Redox regulated molecular chaperone. Protects both thermally unfolding and oxidatively damaged proteins from irreversible aggregation. Plays an important role in the bacterial defense system toward oxidative stress. The chain is 33 kDa chaperonin from Bacillus pumilus (strain SAFR-032).